The following is a 468-amino-acid chain: Neuronal acetylcholine receptor subunit alpha-5 (468 aa).

The signal sequence occupies residues Met-1 to Gly-22. The Extracellular portion of the chain corresponds to Arg-23–Thr-254. 3 N-linked (GlcNAc...) asparagine glycosylation sites follow: Asn-155, Asn-183, and Asn-229. Residues Cys-170 and Cys-184 are joined by a disulfide bond. A disulfide bridge connects residues Cys-234 and Cys-235. Helical transmembrane passes span Leu-255–Pro-275, Ile-282–Ile-302, and Leu-317–Ile-337. Topologically, residues His-338–Arg-429 are cytoplasmic. The chain crosses the membrane as a helical span at residues Met-430–Ile-451. The Extracellular segment spans residues Tyr-452–Lys-468.

It belongs to the ligand-gated ion channel (TC 1.A.9) family. Acetylcholine receptor (TC 1.A.9.1) subfamily. Alpha-5/CHRNA5 sub-subfamily. Neuronal AChR that forms heteropentamers composed of two different type of subunits: alpha and non-alpha (beta). CHRNA5/alpha-5 subunit is only able to form functional nAChRs when co-assembled with another alpha subunit, can be combined to CHRNA4/alpha-4 or CHRNA3/alpha-3 and CHRNB4/beta-4 or CHRNB2/beta-2 to give rise to functional receptors. Interacts with LYPD6.

It is found in the synaptic cell membrane. It localises to the cell membrane. The catalysed reaction is Ca(2+)(in) = Ca(2+)(out). The enzyme catalyses K(+)(in) = K(+)(out). It carries out the reaction Na(+)(in) = Na(+)(out). Its activity is regulated as follows. Activated by a myriad of ligands such as acetylcholine, cytisine, nicotine, choline and epibatidine. Its function is as follows. Component of neuronal acetylcholine receptors (nAChRs) that function as pentameric, ligand-gated cation channels with high calcium permeability among other activities. nAChRs are excitatory neurotrasnmitter receptors formed by a collection of nAChR subunits known to mediate synaptic transmission in the nervous system and the neuromuscular junction. Each nAchR subunit confers differential attributes to channel properties, including activation, deactivation and desensitization kinetics, pH sensitivity, cation permeability, and binding to allosteric modulators. Has an accessory rather than functional role and is only able to form functional nAChRs when co-assembled with another beta subunit. Participates in pentameric assemblies along with CHRNA3, CHRNA4, CHRNB2 and CHRNB4. Increases receptor sensitivity to acetylcholine and nicotine when associated with CHRNA4 and CHRNB2. Plays a role in nicotine addiction. In Homo sapiens (Human), this protein is Neuronal acetylcholine receptor subunit alpha-5.